The chain runs to 351 residues: Nicotinate-nucleotide--dimethylbenzimidazole phosphoribosyltransferase (351 aa).

The Proton acceptor role is filled by glutamate 317.

Belongs to the CobT family.

It catalyses the reaction 5,6-dimethylbenzimidazole + nicotinate beta-D-ribonucleotide = alpha-ribazole 5'-phosphate + nicotinate + H(+). It functions in the pathway nucleoside biosynthesis; alpha-ribazole biosynthesis; alpha-ribazole from 5,6-dimethylbenzimidazole: step 1/2. Functionally, catalyzes the synthesis of alpha-ribazole-5'-phosphate from nicotinate mononucleotide (NAMN) and 5,6-dimethylbenzimidazole (DMB). The polypeptide is Nicotinate-nucleotide--dimethylbenzimidazole phosphoribosyltransferase (Pseudomonas fluorescens (strain ATCC BAA-477 / NRRL B-23932 / Pf-5)).